We begin with the raw amino-acid sequence, 712 residues long: Amine oxidase [copper-containing] gamma 1 (712 aa).

Residues 1–24 (MAEPSFARLFLLFFSFLLIFATYS) form the signal peptide. Residues N146 and N173 are each glycosylated (N-linked (GlcNAc...) asparagine). C188 and C210 are joined by a disulfide. 352–363 (YMDAGELGLGPT) contacts substrate. D354 functions as the Proton acceptor in the catalytic mechanism. C373 and C399 are joined by a disulfide. 439–444 (VGNYDY) contacts substrate. Catalysis depends on Y442, which acts as the Schiff-base intermediate with substrate; via topaquinone. Y442 is subject to 2',4',5'-topaquinone. Residues H499 and H501 each contribute to the Cu cation site. D508, M509, and D510 together coordinate Mn(2+). N-linked (GlcNAc...) asparagine glycosylation is found at N516 and N617. 2 residues coordinate Mn(2+): D651 and I652. A Cu cation-binding site is contributed by H662.

It belongs to the copper/topaquinone oxidase family. Homodimer. The cofactor is Cu cation. Zn(2+) is required as a cofactor. Requires L-topaquinone as cofactor. It depends on Mn(2+) as a cofactor. Topaquinone (TPQ) is generated by copper-dependent autoxidation of a specific tyrosyl residue. As to expression, mostly expressed in roots, stems and flowers, and, at lower levels, in leaves and cotyledons.

The protein resides in the secreted. It localises to the extracellular space. It is found in the apoplast. It catalyses the reaction a primary methyl amine + O2 + H2O = an aldehyde + H2O2 + NH4(+). It participates in amine and polyamine degradation; putrescine degradation. In terms of biological role, copper amine oxidase that can use putrescine and spermidine as substrates. Required for abscisic acid- (ABA) and polyamine- (PA) and H(2)O(2)-dependent induced nitric oxide (NO) biosynthesis. Involved in ABA signal transduction and in responses to osmotic stress. The sequence is that of Amine oxidase [copper-containing] gamma 1 from Arabidopsis thaliana (Mouse-ear cress).